The sequence spans 100 residues: uncharacterized protein (100 aa).

Residues valine 28 to isoleucine 45 form a helical membrane-spanning segment.

It localises to the membrane. This is an uncharacterized protein from Saccharomyces cerevisiae (strain ATCC 204508 / S288c) (Baker's yeast).